We begin with the raw amino-acid sequence, 218 residues long: Probable transaldolase (218 aa).

The active-site Schiff-base intermediate with substrate is K87.

It belongs to the transaldolase family. Type 3B subfamily.

The protein resides in the cytoplasm. It catalyses the reaction D-sedoheptulose 7-phosphate + D-glyceraldehyde 3-phosphate = D-erythrose 4-phosphate + beta-D-fructose 6-phosphate. It functions in the pathway carbohydrate degradation; pentose phosphate pathway; D-glyceraldehyde 3-phosphate and beta-D-fructose 6-phosphate from D-ribose 5-phosphate and D-xylulose 5-phosphate (non-oxidative stage): step 2/3. In terms of biological role, transaldolase is important for the balance of metabolites in the pentose-phosphate pathway. In Bacteroides thetaiotaomicron (strain ATCC 29148 / DSM 2079 / JCM 5827 / CCUG 10774 / NCTC 10582 / VPI-5482 / E50), this protein is Probable transaldolase.